Reading from the N-terminus, the 1438-residue chain is DNA-directed RNA polymerase subunit beta' (1438 aa).

Cysteine 70, cysteine 72, cysteine 85, and cysteine 88 together coordinate Zn(2+). Residues aspartate 461, aspartate 463, and aspartate 465 each contribute to the Mg(2+) site. Residues cysteine 821, cysteine 895, cysteine 902, and cysteine 905 each contribute to the Zn(2+) site. Over residues 1413–1427 (DAMAAAMGGDSAGGD) the composition is skewed to low complexity. The interval 1413-1438 (DAMAAAMGGDSAGGDTKPEAPEASEE) is disordered.

Belongs to the RNA polymerase beta' chain family. As to quaternary structure, the RNAP catalytic core consists of 2 alpha, 1 beta, 1 beta' and 1 omega subunit. When a sigma factor is associated with the core the holoenzyme is formed, which can initiate transcription. It depends on Mg(2+) as a cofactor. Zn(2+) serves as cofactor.

The enzyme catalyses RNA(n) + a ribonucleoside 5'-triphosphate = RNA(n+1) + diphosphate. DNA-dependent RNA polymerase catalyzes the transcription of DNA into RNA using the four ribonucleoside triphosphates as substrates. The chain is DNA-directed RNA polymerase subunit beta' from Erythrobacter litoralis (strain HTCC2594).